A 394-amino-acid polypeptide reads, in one-letter code: Upstream-binding factor 1-like protein 1 (394 aa).

A DNA-binding region (HMG box 1) is located at residues 101–169; it reads PKRPLTAYLR…DFQKKMRQFK (69 aa). Residues 167–180 are compositionally biased toward basic residues; that stretch reads QFKKRHPVSGHPKK. The disordered stretch occupies residues 167–197; sequence QFKKRHPVSGHPKKSVVPQSHPTKVPTKSQG. Residues 183-197 show a composition bias toward polar residues; that stretch reads VPQSHPTKVPTKSQG. Residues 225 to 291 constitute a DNA-binding region (HMG box 2); it reads RKPPMNAYHK…QYRVKLDLWL (67 aa). Residues 305-394 are disordered; it reads AKATCGKRKN…SDSSSTDEDD (90 aa).

It localises to the cytoplasm. The protein localises to the nucleus. Its function is as follows. Essential for proliferation of the inner cell mass and trophectodermal cells in peri-implantation development. The protein is Upstream-binding factor 1-like protein 1 of Mus musculus (Mouse).